We begin with the raw amino-acid sequence, 145 residues long: Leghemoglobin (145 aa).

The Globin domain maps to 3–145 (GFTEKQEALV…ELAAALKKAF (143 aa)). Residues tyrosine 26 and tyrosine 31 each carry the nitrated tyrosine modification. Residue histidine 62 coordinates O2. Residues lysine 65, histidine 93, and lysine 96 each coordinate heme b. A Nitrated tyrosine modification is found at tyrosine 134.

It belongs to the plant globin family. As to quaternary structure, monomer. Nitrated in effective nodules and particularly in hypoxic conditions; this mechanism may play a protective role in the symbiosis by buffering toxic peroxynitrite NO(2)(-). Nitration level decrease during nodule senescence. Root nodules.

It localises to the cytoplasm. The protein localises to the cytosol. It is found in the nucleus. Its function is as follows. Leghemoglobin that reversibly binds oxygen O(2) through a pentacoordinated heme iron. In root nodules, facilitates the diffusion of oxygen to the bacteroids while preventing the bacterial nitrogenase from being inactivated by buffering dioxygen, nitric oxide and carbon monoxide, and promoting the formation of reactive oxygen species (ROS, e.g. H(2)O(2)). This role is essential for symbiotic nitrogen fixation (SNF). The polypeptide is Leghemoglobin (Psophocarpus tetragonolobus (Winged bean)).